Here is a 90-residue protein sequence, read N- to C-terminus: UPF0367 protein PMT9312_0127 (90 aa).

It belongs to the UPF0367 family.

The polypeptide is UPF0367 protein PMT9312_0127 (Prochlorococcus marinus (strain MIT 9312)).